Here is a 1465-residue protein sequence, read N- to C-terminus: MSESLAETAAAAENEEQADDSMEKLVFDEEDEQMVSGEDLLGGKSLIMSDDSEAEDGSQEKPLSPKDRRRRMMDSDQEEDAMDQGNGDSIKNSEDVEEEMVSRPKKKVSAIIDSDNDDEQQAEKKTQKEEGKQPVKSKKKRSQVNQEDQEKPVKSNKTKKAVKNKTQANKAEDDQDNPSKEDKPKKVVKNKKQTNKDGKPQTNEEYDHHQQHEKPAKTQKSKKLAKKQKQQEDDKEDNGTEQEKKKPSPKSKAKKSDKSKIDSLMDNEEDAGEDLKMYQEDQEPQKQKTKKSAKKTNKDSKEESGEDQEHQEQKKPLKKIKLDNIDTKEDKEQIVKPKKMAKKNKQKVLSDDESEENQNEKVDQDHDLKKMSSENELEMGSDKEDQEMQEPPKKAKKNKQRMDSESEDEIPKTESEKITSSPKNKLKGLVDSESEPEETAEEVSPVKNKLKGLVDSESEPELDNPEESAGEQEAPMESALSREKPKKAKVVRESAKKALEGMQAIQSEQQRLHREAHINVPYHQPKPRTLKEFLSRRTINAPLATALAGGSPMPSRQPRKSVGLRMTREELEAYAKLMEDRAKEATEFFKSESESDEEDDSENEEPMELKDNPGVMDEMLDNPKTPEQPKNDTEDMTSQAVIEVPVLGEDKTDDTVGDEAMVADSITEEEPIASTSTAAALKLADNFEIQQETNAKSPSKVCLVTEVVELPKLDLSTINITPSSKPATPKISEVIRQLKIEKSLDESPSLKGDPNMVIDLETGDMFAKKPTGVDDLLNRLMKTREAKKHKTTETVNILTTEHGKLEMSKVSIHLHEEEIAKEPKPGAGYMKMQEHLKTLITKKRMEDLRKKQAEEQEKMAEDEEEGMDVDEEYEPEDKPGYAEVTINEDEEIIDKVDSTAEDDGDAEENKNDADEDPEDNPVEDSEDEKNDSESEQECEANPEPETQTRKKNRIIKAFEDDNSDEDDLDLLQTPKPSNVAPITATQLQLSAHKLFDVETRRTASDEENELLDLCSGQFPQTQMLSSDAPSVDTAVISQIPMTQFGGSSQAADELEGLCSGTFATQLPSQAPTQQPEQQEESEVPAAVANRIVSSDEEAQEDALEVDKPRNKKLTKKRPKKKAKLGFSDDEDSDDEVEEFDEESDAEPVEEIPETFVDYDSEENEIVVEMTKKDRKIRAANFVDKEAELSESEWGSADEDEKNMDEYDIELGDEDQFDRDKLRHELGQIHARKMMDQDIREVRKIKELLFEEEEEGANRQRQFRWKNVEAGFSLDDNRTDNGEGNDGSGDEENEHLWRKIRYEREQLLLEKGLKPEVASPLSTSVINTSNNGNSPAIRRLNIISSKKTTVEVKKNSPFLISKTIAGKQQKSAVRGSFLIRDQQTLSKLAGLTKGTSGDVDAAEGTISVKSAKAKNFVFATLTEEEHENRKRKAADILNSSTETGVNFIKKPKLEPRRDKCLIDQLL.

Positions 1 to 12 (MSESLAETAAAA) are enriched in low complexity. Disordered regions lie at residues 1-490 (MSES…KAKV), 544-566 (ATALAGGSPMPSRQPRKSVGLRM), and 585-636 (ATEF…TEDM). A phosphoserine mark is found at S45, S49, S52, S64, S75, S109, and S114. Over residues 121-133 (QAEKKTQKEEGKQ) the composition is skewed to basic and acidic residues. Positions 154-163 (KSNKTKKAVK) are enriched in basic residues. The span at 205 to 216 (EYDHHQQHEKPA) shows a compositional bias: basic and acidic residues. Basic residues predominate over residues 217 to 228 (KTQKSKKLAKKQ). Basic and acidic residues-rich tracts occupy residues 229–246 (KQQEDDKEDNGTEQEKKK), 254–263 (KKSDKSKIDS), 273–286 (EDLKMYQEDQEPQK), and 296–335 (TNKDSKEESGEDQEHQEQKKPLKKIKLDNIDTKEDKEQIV). Positions 260-281 (KIDSLMDNEEDAGEDLKMYQED) form a coiled coil. Over residues 336 to 346 (KPKKMAKKNKQ) the composition is skewed to basic residues. 2 positions are modified to phosphoserine: S350 and S354. The span at 358–373 (QNEKVDQDHDLKKMSS) shows a compositional bias: basic and acidic residues. Acidic residues predominate over residues 375–388 (NELEMGSDKEDQEM). Phosphoserine is present on residues S381, S404, S406, S432, S434, S444, S456, S458, and S468. Over residues 400–417 (QRMDSESEDEIPKTESEK) the composition is skewed to basic and acidic residues. A compositionally biased stretch (acidic residues) spans 432–441 (SESEPEETAE). The segment covering 456–470 (SESEPELDNPEESAG) has biased composition (acidic residues). A coiled-coil region spans residues 564 to 587 (LRMTREELEAYAKLMEDRAKEATE). Residues 594 to 606 (ESDEEDDSENEEP) show a composition bias toward acidic residues. At T693 the chain carries Phosphothreonine. Residues 839 to 874 (LITKKRMEDLRKKQAEEQEKMAEDEEEGMDVDEEYE) are a coiled coil. Basic and acidic residues predominate over residues 845-859 (MEDLRKKQAEEQEKM). The tract at residues 845 to 977 (MEDLRKKQAE…LDLLQTPKPS (133 aa)) is disordered. 3 stretches are compositionally biased toward acidic residues: residues 860–875 (AEDEEEGMDVDEEYEP), 913–942 (ADEDPEDNPVEDSEDEKNDSESEQECEANP), and 960–969 (DDNSDEDDLD). Position 963 is a phosphoserine (S963). Phosphothreonine is present on T973. The residue at position 990 (S990) is a Phosphoserine. The disordered stretch occupies residues 1058 to 1154 (CSGTFATQLP…AEPVEEIPET (97 aa)). Residues 1067 to 1076 (PSQAPTQQPE) show a composition bias toward low complexity. A phosphoserine mark is found at S1093 and S1094. Acidic residues predominate over residues 1094 to 1103 (SDEEAQEDAL). The span at 1109–1123 (RNKKLTKKRPKKKAK) shows a compositional bias: basic residues. The segment covering 1127 to 1154 (SDDEDSDDEVEEFDEESDAEPVEEIPET) has biased composition (acidic residues). S1287 carries the post-translational modification Phosphoserine.

The protein belongs to the claspin family. Post-translationally, phosphorylated in response to DNA damage by IR and HU treatment. Phosphorylation does not require mei-41 or tefu. In terms of tissue distribution, detected in the ovary but not in the testis (at protein level).

Its subcellular location is the nucleus. Required for checkpoint signaling in response to DNA replication stress; either resulting from normal embryogenesis or induced by the DNA synthesis inhibitor hydroxyurea (HU). It is not required for the G2 arrest resulting from DNA double strand breaks induced by ionizing irradiation (IR). Necessary for the timely phosphorylation of Cdk1 at the mid-blastula transition. May have a minor role in maintaining genomic stability in mitotic cells. The protein is Claspin of Drosophila melanogaster (Fruit fly).